The chain runs to 129 residues: Small ribosomal subunit protein uS11 (129 aa).

It belongs to the universal ribosomal protein uS11 family. As to quaternary structure, part of the 30S ribosomal subunit. Interacts with proteins S7 and S18. Binds to IF-3.

In terms of biological role, located on the platform of the 30S subunit, it bridges several disparate RNA helices of the 16S rRNA. Forms part of the Shine-Dalgarno cleft in the 70S ribosome. The polypeptide is Small ribosomal subunit protein uS11 (Bartonella quintana (strain Toulouse) (Rochalimaea quintana)).